The chain runs to 515 residues: Ecdysteroid UDP-glucosyltransferase (515 aa).

A signal peptide spans 1 to 31 (MKMIILVVSLHVLRNSAAVRVLCMFPTPSYS).

The protein belongs to the UDP-glycosyltransferase family.

In terms of biological role, catalyzes the transfer of glucose from UDP-glucose to ecdysteroids which are insect molting hormones. Expression of egt interferes with normal insect development and block molting. This chain is Ecdysteroid UDP-glucosyltransferase (EGT), found in Spodoptera littoralis nuclear polyhedrosis virus (SlNPV).